A 332-amino-acid polypeptide reads, in one-letter code: Beta-hexosaminidase (332 aa).

Substrate contacts are provided by residues aspartate 62, arginine 70, arginine 131, and lysine 161 to histidine 162. Residue histidine 174 is the Proton donor/acceptor of the active site. The Nucleophile role is filled by aspartate 244.

This sequence belongs to the glycosyl hydrolase 3 family. NagZ subfamily.

It localises to the cytoplasm. The catalysed reaction is Hydrolysis of terminal non-reducing N-acetyl-D-hexosamine residues in N-acetyl-beta-D-hexosaminides.. The protein operates within cell wall biogenesis; peptidoglycan recycling. Functionally, plays a role in peptidoglycan recycling by cleaving the terminal beta-1,4-linked N-acetylglucosamine (GlcNAc) from peptide-linked peptidoglycan fragments, giving rise to free GlcNAc, anhydro-N-acetylmuramic acid and anhydro-N-acetylmuramic acid-linked peptides. The sequence is that of Beta-hexosaminidase from Pseudomonas aeruginosa (strain LESB58).